A 1721-amino-acid chain; its full sequence is Latent-transforming growth factor beta-binding protein 1 (1721 aa).

The signal sequence occupies residues 1-23 (MAGAWLRWGLLLWAGLLASSAHG). Low complexity predominate over residues 64 to 81 (RSSAAAGAPSRASPGVPS). The interval 64–158 (RSSAAAGAPS…SGGGSRLQVH (95 aa)) is disordered. Positions 99 to 111 (RPPPPPPPEPARP) are enriched in pro residues. Residues 112–130 (AVPGGQLHPNPGGHPAAAP) show a composition bias toward low complexity. One can recognise an EGF-like 1 domain in the interval 187–219 (TKPSCVPPCQNGGMCLRPQLCVCKPGTKGKACE). 3 disulfide bridges follow: cysteine 191–cysteine 201, cysteine 195–cysteine 207, and cysteine 209–cysteine 218. The segment at 228–259 (SPVFGGQSPGAASSWGPPEQAAKHTSSKKADT) is disordered. Residues asparagine 347 and asparagine 378 are each glycosylated (N-linked (GlcNAc...) asparagine). The 33-residue stretch at 399-431 (RVVICHLPCMNGGQCSSRDKCQCPPNFTGKLCQ) folds into the EGF-like 2 domain. Disulfide bonds link cysteine 403–cysteine 413, cysteine 407–cysteine 419, cysteine 421–cysteine 430, cysteine 559–cysteine 581, cysteine 568–cysteine 594, and cysteine 582–cysteine 597. N-linked (GlcNAc...) asparagine glycosylation occurs at asparagine 424. The region spanning 557–609 (GRCFQETIGSQCGKALPGLSKQEDCCGTVGTSWGFNKCQKCPKKPSYHGYNQM) is the TB 1 domain. A glycan (N-linked (GlcNAc...) asparagine) is linked at asparagine 620. Residues 626–663 (DINECQLQGVCPNGECLNTMGSYRCTCKIGFGPDPTFS) form the EGF-like 3; calcium-binding domain. 7 cysteine pairs are disulfide-bonded: cysteine 630–cysteine 641, cysteine 636–cysteine 650, cysteine 652–cysteine 665, cysteine 679–cysteine 702, cysteine 689–cysteine 714, cysteine 703–cysteine 717, and cysteine 704–cysteine 729. Serine 647 carries O-linked (Glc) serine glycosylation. Residues 677–729 (GPCYRLVSSGRQCMHPLSVHLTKQLCCCSVGKAWGPHCEKCPLPGTAAFKEIC) form the TB 2 domain. Positions 750–811 (VGKGPVFVKP…APPEKEIPSL (62 aa)) are disordered. O-linked (GalNAc...) threonine glycans are attached at residues threonine 769 and threonine 801. The EGF-like 4; calcium-binding domain occupies 873–910 (EINECTVNPDICGAGHCINLPVRYTCICYEGYRFSEQQ). Intrachain disulfides connect cysteine 877-cysteine 889, cysteine 884-cysteine 898, cysteine 900-cysteine 913, cysteine 919-cysteine 931, cysteine 926-cysteine 940, cysteine 942-cysteine 955, cysteine 961-cysteine 972, cysteine 967-cysteine 981, cysteine 984-cysteine 996, cysteine 1002-cysteine 1013, cysteine 1008-cysteine 1022, cysteine 1025-cysteine 1036, cysteine 1042-cysteine 1053, cysteine 1048-cysteine 1062, cysteine 1064-cysteine 1077, cysteine 1083-cysteine 1094, cysteine 1089-cysteine 1103, cysteine 1105-cysteine 1118, cysteine 1124-cysteine 1135, cysteine 1130-cysteine 1144, cysteine 1146-cysteine 1159, cysteine 1165-cysteine 1177, cysteine 1172-cysteine 1186, cysteine 1188-cysteine 1200, cysteine 1206-cysteine 1218, cysteine 1212-cysteine 1227, cysteine 1229-cysteine 1242, cysteine 1248-cysteine 1260, and cysteine 1254-cysteine 1269. Residues 915 to 956 (DIDECTQVQHLCSQGRCENTEGSFLCICPAGFMASEEGTNCI) form the EGF-like 5; calcium-binding domain. Serine 937 carries an O-linked (Glc) serine glycan. In terms of domain architecture, EGF-like 6; calcium-binding spans 957–997 (DVDECLRPDVCGEGHCVNTVGAFRCEYCDSGYRMTQRGRCE). A (3R)-3-hydroxyasparagine modification is found at asparagine 974. The 40-residue stretch at 998 to 1037 (DIDECLNPSTCPDEQCVNSPGSYQCVPCTEGFRGWNGQCL) folds into the EGF-like 7; calcium-binding domain. The O-linked (Glc) serine glycan is linked to serine 1019. The EGF-like 8; calcium-binding domain maps to 1038 to 1078 (DVDECLEPNVCANGDCSNLEGSYMCSCHKGYTRTPDHKHCR). O-linked (Glc) serine glycosylation is present at serine 1059. The region spanning 1079 to 1119 (DIDECQQGNLCVNGQCKNTEGSFRCTCGQGYQLSAAKDQCE) is the EGF-like 9; calcium-binding domain. The EGF-like 10; calcium-binding domain maps to 1120–1160 (DIDECQHRHLCAHGQCRNTEGSFQCVCDQGYRASGLGDHCE). Asparagine 1137 carries the (3R)-3-hydroxyasparagine modification. An O-linked (Glc) serine glycan is attached at serine 1141. Residues 1161-1201 (DINECLEDKSVCQRGDCINTAGSYDCTCPDGFQLDDNKTCQ) enclose the EGF-like 11; calcium-binding domain. Residues 1174 to 1176 (RGD) carry the Cell attachment site motif. The N-linked (GlcNAc...) asparagine glycan is linked to asparagine 1197. Positions 1202-1243 (DINECEHPGLCGPQGECLNTEGSFHCVCQQGFSISADGRTCE) constitute an EGF-like 12; calcium-binding domain. Serine 1224 is a glycosylation site (O-linked (Glc) serine). The EGF-like 13; calcium-binding domain maps to 1244–1281 (DIDECVNNTVCDSHGFCDNTAGSFRCLCYQGFQAPQDG). An N-linked (GlcNAc...) asparagine glycan is attached at asparagine 1250. The EGF-like 14; calcium-binding domain occupies 1286 to 1328 (DVNECELLSGVCGEAFCENVEGSFLCVCADENQEYSPMTGQCR). The interval 1344 to 1411 (EEKKECYYNL…PKGKGFVPAG (68 aa)) is 8-Cys3 region. The 55-residue stretch at 1347-1401 (KECYYNLNDASLCDNVLAPNVTKQECCCTSGVGWGDNCEIFPCPVLGTAEFTEMC) folds into the TB 3 domain. 4 disulfides stabilise this stretch: cysteine 1349/cysteine 1372, cysteine 1359/cysteine 1384, cysteine 1373/cysteine 1389, and cysteine 1374/cysteine 1401. Residue asparagine 1366 is glycosylated (N-linked (GlcNAc...) asparagine). A Phosphoserine; by FAM20C modification is found at serine 1414. In terms of domain architecture, EGF-like 15; calcium-binding spans 1424–1466 (DADECLLFGQEICKNGFCLNTRPGYECYCKQGTYYDPVKLQCF). In terms of domain architecture, EGF-like 16; calcium-binding spans 1467 to 1503 (DMDECQDPSSCIDGQCVNTEGSYNCFCTHPMVLDASE). 6 disulfide bridges follow: cysteine 1471-cysteine 1482, cysteine 1477-cysteine 1491, cysteine 1526-cysteine 1550, cysteine 1536-cysteine 1562, cysteine 1551-cysteine 1565, and cysteine 1552-cysteine 1577. O-linked (Glc) serine glycosylation occurs at serine 1488. The C-terminal domain stretch occupies residues 1507-1721 (IRPAESNEQI…LNLEKDSDLE (215 aa)). Residues 1524–1577 (DLCWEHLSDEYVCSRPLVGKQTTYTECCCLYGEAWGMQCALCPLKDSDDYAQLC) enclose the TB 4 domain. 2 positions are modified to phosphoserine: serine 1597 and serine 1616. The EGF-like 17 domain occupies 1621–1657 (QAEECGILNGCENGRCVRVQEGYTCDCFDGYHLDTAK). 5 disulfide bridges follow: cysteine 1625-cysteine 1636, cysteine 1631-cysteine 1645, cysteine 1666-cysteine 1681, cysteine 1676-cysteine 1690, and cysteine 1692-cysteine 1705. The EGF-like 18; calcium-binding domain maps to 1662–1706 (DVNECDELNNRMSLCKNAKCINTDGSYKCLCLPGYVPSDKPNYCT). Serine 1687 carries an O-linked (Glc) serine glycan.

The protein belongs to the LTBP family. As to quaternary structure, interacts with TGFB1; associates via disulfide bonds with the Latency-associated peptide chain (LAP) regulatory chain of TGFB1, leading to regulate activation of TGF-beta-1. LTBP1 does not bind directly to TGF-beta-1, the active chain of TGFB1. Interacts (via C-terminal domain) with FBN1 (via N-terminal domain). Interacts with FBN2. Interacts with ADAMTSL2. Interacts with EFEMP2. Contains hydroxylated asparagine residues. Post-translationally, isoform Short N-terminus is blocked. In terms of processing, two intrachain disulfide bonds from the TB3 domain are rearranged upon TGFB1 binding, and form interchain bonds with TGFB1 propeptide, anchoring it to the extracellular matrix. O-glycosylated on serine residues by POGLUT2 and POGLUT3. In terms of tissue distribution, expressed in the aorta (at protein level). Isoform Long: Expressed in fibroblasts.

It is found in the secreted. It localises to the extracellular space. Its subcellular location is the extracellular matrix. In terms of biological role, key regulator of transforming growth factor beta (TGFB1, TGFB2 and TGFB3) that controls TGF-beta activation by maintaining it in a latent state during storage in extracellular space. Associates specifically via disulfide bonds with the Latency-associated peptide (LAP), which is the regulatory chain of TGF-beta, and regulates integrin-dependent activation of TGF-beta. Outcompeted by LRRC32/GARP for binding to LAP regulatory chain of TGF-beta. This Homo sapiens (Human) protein is Latent-transforming growth factor beta-binding protein 1.